Consider the following 375-residue polypeptide: MFCVQNLPRSSALPLQSFKSHQRRPPCSVNTLGVMSNVNLHRSMAVKAISGPTSSAETSDANVEEEKSETYSTNMTEAMGAVLTYRHELGINYNFIRPDLIVGSCLQTPEDVDKLRSIGVKTIFCLQQNSDLEYFGVDINGIREYAKTYDDIQHLRAEIRDFDAFDLRVRLPAVVSKLYKAINRNGGVTYVHCTAGLGRAPAVTLAYMFWVQGYKLIEAHNLLQSKRSCFPKLDAIKSAAADILTGLRKKVVTLTWKNPDCTTLEISGLDIGWGQRIPLQFDEEQGLWILRRELAEGCYEYKYIVDGEWTINENELVTSANKDGHVNNFVQVFDDNPDSFNANLRKRLTGDDPDLSMDERLKIRQFLESIPDEEQ.

The transit peptide at M1–R42 directs the protein to the amyloplast. The disordered stretch occupies residues I49–Y71. The segment covering G51–A61 has biased composition (polar residues). The 158-residue stretch at N92 to K249 folds into the Tyrosine-protein phosphatase domain. The active-site Phosphocysteine intermediate is the C193. T194–R199 is a substrate binding site. Residues L254–V330 are polysaccharide binding.

As to expression, expressed in phloem parenchyma of 16-24 week old seedlings and 2 year old trees (at protein level). Expressed in leaves of 16-24 week old seedlings and 2 year old trees.

The protein resides in the plastid. The protein localises to the amyloplast. It is found in the nucleus. In terms of biological role, starch granule-associated phosphoglucan phosphatase involved in the control of starch accumulation. Acts as a major regulator of the initial steps of starch degradation at the granule surface. Functions during the day by dephosphorylating the night-accumulated phospho-oligosaccharides. Can release phosphate from both the C6 and the C3 positions. This chain is Phosphoglucan phosphatase DSP4, amyloplastic, found in Castanea sativa (Sweet chestnut).